A 98-amino-acid polypeptide reads, in one-letter code: NADH-ubiquinone oxidoreductase chain 4L (98 aa).

3 helical membrane-spanning segments follow: residues 1-21 (MSMVYINIFLAFILSFMGLLI), 30-50 (LLCLEGMMLSLFIMMTVTILT), and 61-81 (IILLVFAACEAALGLSLLVMI).

Belongs to the complex I subunit 4L family. Core subunit of respiratory chain NADH dehydrogenase (Complex I) which is composed of 45 different subunits.

It is found in the mitochondrion inner membrane. The enzyme catalyses a ubiquinone + NADH + 5 H(+)(in) = a ubiquinol + NAD(+) + 4 H(+)(out). Core subunit of the mitochondrial membrane respiratory chain NADH dehydrogenase (Complex I) which catalyzes electron transfer from NADH through the respiratory chain, using ubiquinone as an electron acceptor. Part of the enzyme membrane arm which is embedded in the lipid bilayer and involved in proton translocation. This chain is NADH-ubiquinone oxidoreductase chain 4L (MT-ND4L), found in Martes americana (American marten).